Here is a 435-residue protein sequence, read N- to C-terminus: MAKFGSRNKSPKWISNGCCFLLGAFTALLLLWGLCSFIIPIPNTDPKLNSVATSLRSLNFPKNPAATLPPNLQHDPPDTTFYDDPETSYTMDKPMKNWDEKRKEWLLHHPSFGAAARDKILLVTGSQPKRCHNPIGDHLLLRFFKNKVDYCRLHNYDIIYNNALLHPKMNSYWAKYPVIRAAMMAHPEVEWVWWVDSDAVFTDMEFKLPLKRYKNHNLVVHGWEGLVRLNHSWTGLNAGVFLIRNCQWSLEFMDVWVSMGPQTPEYEKWGERLRETFKDKVLPDSDDQTALAYLIATDNKDTWREKIFLESEYYFEGYWLEIVKTYENISERYDEVERKVEGLRRRHAEKVSEKYGAMREEYLKDNKRRPFITHFTGCQPCNGHHNPAYNANDCWNGMERALNFADNQILRTYGYHRQNLLDKSVSPLPFGYPAA.

Residues 1-20 (MAKFGSRNKSPKWISNGCCF) lie on the Cytoplasmic side of the membrane. The helical; Signal-anchor for type II membrane protein transmembrane segment at 21-41 (LLGAFTALLLLWGLCSFIIPI) threads the bilayer. At 42–435 (PNTDPKLNSV…SPLPFGYPAA (394 aa)) the chain is on the lumenal side. N-linked (GlcNAc...) asparagine glycosylation is found at Asn-230 and Asn-328. Residues 321–354 (EIVKTYENISERYDEVERKVEGLRRRHAEKVSEK) are a coiled coil.

The protein belongs to the glycosyltransferase 34 family.

The protein localises to the golgi apparatus membrane. Galactomannan galactosyltransferase (GMGT) involved in galactomannan biosynthesis in seed endosperm. GMGT specificity is an important factor regulating the distribution and amount of alpha-1,6-galactose (Gal) substitution of the beta-1,4-linked mannan backbone. The polypeptide is Galactomannan galactosyltransferase 1 (GMGT1) (Cyamopsis tetragonoloba (Guar)).